The following is a 1707-amino-acid chain: MESTQVIDWDAEEEEETELSSGSLGYSVEPIGQLRLFSGTHGPERDFPLYLGKNVVGRSPDCSVALPFPSISKQHAVIEISAWNKAPILQDCGSLNGTQIVKPPRVLPPGVSHRLRDQELILFADFPCQYHRLDVPPPLVPRSLLTIEKTPRIRIESQNSRVLLAADSEEEGDFPSGRCVANGQRNTASPSATVVPESDEEVSSPAPSVPGPSSPFGLGSDTDEEQGQQPGVEESSLADSSGAAGEAEQPEANGTTAGIQAQPTEHKLKDTKVKKEAGRAGVSDGSVLERSPTLGEDSDTEVDEDHKPGFADSETDVEEERIPVTPPVAPVKKNQVLLAVGIGDPEAPGVAHLQDCLAGSGTDVEDKTALDVPLERNHTPMVINSDTDEEEEEEEEVSAALTLAHLKERGIGLWSRDPGAEEVKSQPQVLVEQSQSASGRDSDTDVEEESSGRKREIIPDSPMDVDEALTVTQPESQPPRRPNDADEYMDMSSPGSHLVVNQASFAVVGKTRAQVEEEVPGPSVILGEKHQVPLEGAQPPEEAWETAVQEGSSSPEAAASVRPSQQPVAEDAGTECATAVSEQESTLEVRSQSGSPAAPVEQVVIHTDTSGDPTLPQREGAQTPTGREREAHVGRTKSAKECCDAEPEDLCLPATQCFVEGESQHPEAVQSLENEPTQLFPCTLPQEPGPSHLSLQTPGADTLDVPWEVLATQPFCLREQSETSELHEAHGSQPSLPREPPGHQHLVHTSPVHTELLRIEGREIQTVEKAMGIPKEMADRMTPEREPLEREIRGRTENSERDVIGEELIQGTKDREPKKVLARDSQRKEADKDLEGNRESLEVEIEMSKDSQKRERKVEKPEPKREWEPADLEVTPDRGVTEEGSHDQKGQIASLTLKPGVGVKDLEGLASAPIITGSQADGGKGDPLSPGRQQRGRLSCQTTPAGKASRGDPEPPDHCLFSSVPEASTQSLLTSQSQKQSTPQPLFSTSSSEIPLPESLHTKPNVRPRRSSRMTPSPHSSAALKPNTTCPTNQPAASRPTSRPTRGRANRSSTRTPELIVPVDPELQPSTSTEQPVIPKLTSQVTEGRVQMPEPLLTGPEIQSPTSTEQSVTPDRKPRATRGRPSKSPNKTPEPLISTGPELQPPTSIEQPVIPKPTSRVTRGRPRKSSVRTPESVVSTGPELQPLTSIEQPVIPEPRATRGRPSKSSIKTPESVVPTGPELQPLTSAKQPVTPNLTSRASRGRSSKSIRTPEPVVQTGPEFHPSTSTEQPDTREPSSQARTRRSAVKTPEASVPTTPELQPFTSKKQPAPKPTALVTQGRTYKPSTEDCESVGPVAPDFEPSTSTDHLVTPKVTDQSLTLQSSPLSASPVSSTPDLKPPVPIAQPVTPEPIPQANHQRKRRAAGKQGSRTVPLGHKSYSALSEPEPQSSASQSSGASEADSPRQKRPRRQASQKTVVIKEEPVETEVKEEPQETAIPTPEKRKRDHAEEVTQGKPTRSRRTKPNQETAPKVLFTGVMDSRGERAVLALGGSLASSVNEASHLVTDRIRRTVKFLCALGKGIPILSLNWLYQSRKAGCFLPPDDYLVTDPEQEKNFSFSLRDSLCRARERRLLEDYEIHVTPGVQPPPPQMGEIISCCGGTFLPSMPHSYKLHRVIITCTEDLPRCAIPSRLGLPLLSPEFLLTGVLKQEATPEAFVLSNLEMSST.

The segment at M1 to S23 is disordered. Residues M1–T150 are interaction with CHEK2. An interaction with the MRN complex region spans residues E2–T222. T4 carries the phosphothreonine modification. Residues W9 to E18 are compositionally biased toward acidic residues. The 52-residue stretch at N54–R105 folds into the FHA domain. A Phosphothreonine modification is found at T146. A disordered region spans residues A166–V328. Phosphoserine occurs at positions 168 and 176. Over residues G183–A192 the composition is skewed to polar residues. A phosphoserine mark is found at S198 and S220. T222 bears the Phosphothreonine mark. Residues A252–P263 are compositionally biased toward polar residues. The span at T264–G278 shows a compositional bias: basic and acidic residues. Position 298 is a phosphoserine (S298). T300 carries the post-translational modification Phosphothreonine. Residue S313 is modified to Phosphoserine. Residue T315 is modified to Phosphothreonine. S360 carries the post-translational modification Phosphoserine. A Phosphothreonine modification is found at T362. Over residues A369–H378 the composition is skewed to basic and acidic residues. Residues A369–S398 are disordered. S385 is subject to Phosphoserine. A compositionally biased stretch (acidic residues) spans D386–V397. T387 carries the post-translational modification Phosphothreonine. Phosphoserine is present on residues S398, S415, S425, S438, and S442. 4 disordered regions span residues D417–H497, P520–C642, L679–G699, and R718–L746. The span at S425 to G439 shows a compositional bias: polar residues. T444 carries the post-translational modification Phosphothreonine. Phosphoserine is present on S461. T470 is subject to Phosphothreonine. Phosphoserine is present on residues S492, S493, S591, S593, and S595. The span at V580–S595 shows a compositional bias: polar residues. Residues G626 to C642 are compositionally biased toward basic and acidic residues. Positions E719 to H730 are enriched in basic and acidic residues. Residues S735 and S750 each carry the phosphoserine modification. At K769 the chain carries N6-acetyllysine. 3 stretches are compositionally biased toward basic and acidic residues: residues A778–I804, T812–E868, and T875–K889. Disordered regions lie at residues A778–P899 and I914–A1510. A phosphoserine mark is found at S885, S929, and S962. The span at S968–L986 shows a compositional bias: low complexity. Phosphoserine is present on S991. Polar residues-rich tracts occupy residues P1026–T1056, Q1068–T1086, and E1101–T1113. T1056 is modified (phosphothreonine). Residues S1104, S1126, and S1128 each carry the phosphoserine modification. Phosphothreonine is present on residues T1132, T1173, and T1234. Polar residues-rich tracts occupy residues P1225–A1241, P1265–A1281, V1295–K1308, and L1317–P1326. 2 positions are modified to phosphothreonine: T1297 and T1298. S1327 bears the Phosphoserine mark. Positions P1343 to Q1363 are enriched in polar residues. T1352 bears the Phosphothreonine mark. The residue at position 1359 (S1359) is a Phosphoserine. Residues S1364 to P1376 show a composition bias toward low complexity. At T1375 the chain carries Phosphothreonine. Residues L1378–I1393 are compositionally biased toward pro residues. K1418 is covalently cross-linked (Glycyl lysine isopeptide (Lys-Gly) (interchain with G-Cter in SUMO2)). Residues S1421–A1441 show a composition bias toward low complexity. Phosphoserine occurs at positions 1435, 1436, 1439, and 1443. The segment covering V1459–P1473 has biased composition (basic and acidic residues). A Glycyl lysine isopeptide (Lys-Gly) (interchain with G-Cter in SUMO1); alternate cross-link involves residue K1461. Residue K1461 forms a Glycyl lysine isopeptide (Lys-Gly) (interchain with G-Cter in SUMO2); alternate linkage. T1480 is modified (phosphothreonine). Over residues P1481 to T1493 the composition is skewed to basic and acidic residues. K1496 carries the N6-acetyllysine modification. BRCT domains follow at residues A1510–V1588 and R1609–S1700.

As to quaternary structure, homodimer. Interacts with H2AX, which requires phosphorylation of H2AX on 'Ser-139'. Interacts with the MRN complex, composed of MRE11, RAD50, and NBN. Interacts with CHEK2, which requires ATM-mediated phosphorylation of 'Thr-68' within the FHA domain of CHEK2. Interacts constitutively with the BRCA1-BARD1 complex, SMC1A and TP53BP1. Interacts with ATM and FANCD2, and these interactions are reduced upon DNA damage. Also interacts with the PRKDC complex, composed of XRCC6/KU70, XRCC5/KU80 and PRKDC/XRCC7. This interaction may be required for PRKDC autophosphorylation, which is essential for DNA double strand break (DSB) repair. When phosphorylated by ATM, interacts with RNF8 (via FHA domain). Interacts with CEP164. When phosphorylated, interacts with APTX (via FHA-like domain). Interacts (when phosphorylated) with TOPBP1; promoting TOPBP1 localization to DNA damage sites during mitosis. Interacts (when phosphorylated) with NBN; promoting NBN and MRN complex localization to DNA damage sites. In terms of processing, phosphorylated upon exposure to ionizing radiation (IR), ultraviolet radiation (UV), and hydroxyurea (HU). Phosphorylation in response to IR requires ATM, NBN, and possibly CHEK2. Also phosphorylated during the G2/M phase of the cell cycle and during activation of the mitotic spindle checkpoint. Phosphorylation at Thr-4 by ATM stabilizes and enhances homodimerization via the FHA domain. Phosphorylated at Ser-168 and Ser-198 by CK2 in response to DNA damage during mitosis, promoting interaction with TOPBP1. Phosphorylated by CK2 in response to DNA damage, promoting interaction with NBN and recruitment of the MRN complex to DNA damage sites. Post-translationally, sumoylation at Lys-1461 by PIAS4 following DNA damage promotes ubiquitin-mediated degradation. Ubiquitinated by RNF4, leading to proteasomal degradation; undergoes 'Lys-48'-linked polyubiquitination.

The protein resides in the nucleus. It localises to the chromosome. Histone reader protein required for checkpoint-mediated cell cycle arrest in response to DNA damage within both the S phase and G2/M phases of the cell cycle. Specifically recognizes and binds histone H2AX phosphorylated at 'Ser-139', a marker of DNA damage, serving as a scaffold for the recruitment of DNA repair and signal transduction proteins to discrete foci of DNA damage sites. Also required for downstream events subsequent to the recruitment of these proteins. These include phosphorylation and activation of the ATM, CHEK1 and CHEK2 kinases, and stabilization of TP53/p53 and apoptosis. ATM and CHEK2 may also be activated independently by a parallel pathway mediated by TP53BP1. Required for chromosomal stability during mitosis by promoting recruitment of TOPBP1 to DNA double strand breaks (DSBs): TOPBP1 forms filamentous assemblies that bridge MDC1 and tether broken chromosomes during mitosis. Required for the repair of DSBs via homologous recombination by promoting recruitment of NBN component of the MRN complex to DSBs. This chain is Mediator of DNA damage checkpoint protein 1 (Mdc1), found in Mus musculus (Mouse).